We begin with the raw amino-acid sequence, 156 residues long: Small ribosomal subunit protein uS7 (156 aa).

It belongs to the universal ribosomal protein uS7 family. As to quaternary structure, part of the 30S ribosomal subunit. Contacts proteins S9 and S11.

Functionally, one of the primary rRNA binding proteins, it binds directly to 16S rRNA where it nucleates assembly of the head domain of the 30S subunit. Is located at the subunit interface close to the decoding center, probably blocks exit of the E-site tRNA. This is Small ribosomal subunit protein uS7 from Geotalea uraniireducens (strain Rf4) (Geobacter uraniireducens).